Consider the following 333-residue polypeptide: Probable G-protein coupled receptor 33 (333 aa).

Topologically, residues 1-30 are extracellular; sequence MDLINSTDYLINASTLVRNSTQFLAPASKM. 3 N-linked (GlcNAc...) asparagine glycosylation sites follow: N5, N12, and N19. The chain crosses the membrane as a helical span at residues 31-53; it reads IIALSLYISSIIGTITNGLYLWV. Over 54–64 the chain is Cytoplasmic; the sequence is LRFKMKQTVNT. Residues 65 to 86 traverse the membrane as a helical segment; sequence LLFFHLILSYFISTMILPFMAT. Over 87–103 the chain is Extracellular; that stretch reads SQLQDNHWNFGTALCKV. A disulfide bridge links C101 with C179. Residues 104-124 form a helical membrane-spanning segment; sequence FNGTLSLGMFTSVFFLSAIGL. Over 125-143 the chain is Cytoplasmic; it reads DRYLLTLHPVWSQQHRTPR. A helical membrane pass occupies residues 144-165; it reads WASSIVLGVWISAAALSIPYLI. Residues 166 to 209 lie on the Extracellular side of the membrane; the sequence is FRQTHHDRKGKVTCQNNYAVSTNWESKEMQALRQWIHVACFISR. A helical membrane pass occupies residues 210 to 230; the sequence is FLLGFLLPFFIIIFCYERVAS. At 231–246 the chain is on the cytoplasmic side; the sequence is KVKERSLFKSSKPFKV. Residues 247–268 traverse the membrane as a helical segment; the sequence is MMTAIISFFVCWMPYHIHQGLL. The Extracellular portion of the chain corresponds to 269 to 283; it reads LTMNQSLLLELTLIL. N-linked (GlcNAc...) asparagine glycosylation occurs at N272. Residues 284 to 303 form a helical membrane-spanning segment; that stretch reads TVLTTSFNTIFSPTLYLFVG. Topologically, residues 304–333 are cytoplasmic; that stretch reads ENFKKVFKKSILALFESTFSEDSSVERTQT.

Belongs to the G-protein coupled receptor 1 family.

The protein localises to the cell membrane. Its function is as follows. Orphan receptor; could be a chemoattractant receptor. The chain is Probable G-protein coupled receptor 33 (GPR33) from Pan paniscus (Pygmy chimpanzee).